We begin with the raw amino-acid sequence, 408 residues long: 3-hydroxy-3-methylglutaryl-coenzyme A reductase (408 aa).

Active-site charge relay system residues include Glu101 and Asp307. The Proton donor role is filled by His403.

It belongs to the HMG-CoA reductase family.

It carries out the reaction (R)-mevalonate + 2 NADP(+) + CoA = (3S)-3-hydroxy-3-methylglutaryl-CoA + 2 NADPH + 2 H(+). It participates in metabolic intermediate biosynthesis; (R)-mevalonate biosynthesis; (R)-mevalonate from acetyl-CoA: step 3/3. Functionally, converts HMG-CoA to mevalonate. In Pyrococcus abyssi (strain GE5 / Orsay), this protein is 3-hydroxy-3-methylglutaryl-coenzyme A reductase (hmgA).